The following is a 156-amino-acid chain: Small ribosomal subunit protein uS7 (156 aa).

Belongs to the universal ribosomal protein uS7 family. In terms of assembly, part of the 30S ribosomal subunit. Contacts proteins S9 and S11.

One of the primary rRNA binding proteins, it binds directly to 16S rRNA where it nucleates assembly of the head domain of the 30S subunit. Is located at the subunit interface close to the decoding center, probably blocks exit of the E-site tRNA. The polypeptide is Small ribosomal subunit protein uS7 (Staphylococcus saprophyticus subsp. saprophyticus (strain ATCC 15305 / DSM 20229 / NCIMB 8711 / NCTC 7292 / S-41)).